We begin with the raw amino-acid sequence, 788 residues long: Ribonucleoside-diphosphate reductase subunit alpha (788 aa).

Residues 2–92 enclose the ATP-cone domain; that stretch reads ITVVKRNGRI…LYDLYHKVSG (91 aa). ATP is bound by residues K6, 12–18, and T52; that span reads EPLDITK. T200 provides a ligand contact to GDP. A disulfide bridge connects residues C216 and C497. DTTP contacts are provided by residues 223-225 and R253; that span reads DNI. N424 lines the GDP pocket. The active-site Proton acceptor is N424. C426 acts as the Cysteine radical intermediate in catalysis. Residues E428 and 661–663 contribute to the GDP site; that span reads SSI. E428 functions as the Proton acceptor in the catalytic mechanism.

It belongs to the ribonucleoside diphosphate reductase large chain family. In terms of assembly, tetramer of two alpha and two beta subunits.

The catalysed reaction is a 2'-deoxyribonucleoside 5'-diphosphate + [thioredoxin]-disulfide + H2O = a ribonucleoside 5'-diphosphate + [thioredoxin]-dithiol. Under complex allosteric control mediated by deoxynucleoside triphosphates and ATP binding to separate specificity and activation sites on the alpha subunit. The type of nucleotide bound at the specificity site determines substrate preference. It seems probable that ATP makes the enzyme reduce CDP and UDP, dGTP favors ADP reduction and dTTP favors GDP reduction. Stimulated by ATP and inhibited by dATP binding to the activity site. Functionally, provides the precursors necessary for DNA synthesis. Catalyzes the biosynthesis of deoxyribonucleotides from the corresponding ribonucleotides. The sequence is that of Ribonucleoside-diphosphate reductase subunit alpha (nrdA) from Helicobacter pylori (strain J99 / ATCC 700824) (Campylobacter pylori J99).